The chain runs to 71 residues: U3-agatoxin-Ao1a (71 aa).

The N-terminal stretch at 1-20 (MKAVIFFCLLSVMVFTVIEA) is a signal peptide. Residues 21–33 (VKEEGTKPAEAAR) constitute a propeptide that is removed on maturation. 4 cysteine pairs are disulfide-bonded: Cys-35/Cys-51, Cys-42/Cys-56, Cys-50/Cys-66, and Cys-58/Cys-64. Position 70 is a serine amide (Ser-70).

It belongs to the neurotoxin 07 (Beta/delta-agtx) family. 01 (aga-2) subfamily. In terms of tissue distribution, expressed by the venom gland.

Its subcellular location is the secreted. Its function is as follows. Insecticidal neurotoxin that modulates the insect Nav channel (DmNaV1/tipE (para/tipE)) in a unique manner, with both the activation and inactivation processes being affected. The voltage dependence of activation is shifted toward more hyperpolarized potentials (analogous to site 4 toxins) and a non-inactivating persistent sodium current is induced (site 3-like action). Interestingly, both effects take place in a voltage-dependent manner, producing a bell-shaped curve between -80 and 0 mV. Compared to beta/delta-agatoxin-1 to -3, this toxin appears to affect the insect sodium channel only weakly. This is U3-agatoxin-Ao1a from Agelena orientalis (Funnel-web spider).